A 619-amino-acid polypeptide reads, in one-letter code: Protein CPn_1016/CP_0837/CPj1016/CpB1054 (619 aa).

The segment at 591–619 (NAKKSEEQTSPQETPEVIRVSYPTTTSAL) is disordered.

This sequence belongs to the chlamydial CPn_1016/CT_858/TC_0248 family.

In Chlamydia pneumoniae (Chlamydophila pneumoniae), this protein is Protein CPn_1016/CP_0837/CPj1016/CpB1054.